Reading from the N-terminus, the 56-residue chain is Large ribosomal subunit protein eL40 (56 aa).

This sequence belongs to the eukaryotic ribosomal protein eL40 family.

This Saccharolobus islandicus (strain Y.N.15.51 / Yellowstone #2) (Sulfolobus islandicus) protein is Large ribosomal subunit protein eL40.